The chain runs to 135 residues: Small ribosomal subunit protein bS6 (135 aa).

Polar residues predominate over residues 99–120 (QHSSLGRSTAPANPMASNTPRT). The interval 99 to 135 (QHSSLGRSTAPANPMASNTPRTEGQEQAKTEPQTAPA) is disordered.

The protein belongs to the bacterial ribosomal protein bS6 family.

In terms of biological role, binds together with bS18 to 16S ribosomal RNA. The chain is Small ribosomal subunit protein bS6 from Synechococcus sp. (strain RCC307).